The primary structure comprises 216 residues: Leucyl/phenylalanyl-tRNA--protein transferase (216 aa).

This sequence belongs to the L/F-transferase family.

The protein resides in the cytoplasm. The enzyme catalyses N-terminal L-lysyl-[protein] + L-leucyl-tRNA(Leu) = N-terminal L-leucyl-L-lysyl-[protein] + tRNA(Leu) + H(+). It carries out the reaction N-terminal L-arginyl-[protein] + L-leucyl-tRNA(Leu) = N-terminal L-leucyl-L-arginyl-[protein] + tRNA(Leu) + H(+). It catalyses the reaction L-phenylalanyl-tRNA(Phe) + an N-terminal L-alpha-aminoacyl-[protein] = an N-terminal L-phenylalanyl-L-alpha-aminoacyl-[protein] + tRNA(Phe). Its function is as follows. Functions in the N-end rule pathway of protein degradation where it conjugates Leu, Phe and, less efficiently, Met from aminoacyl-tRNAs to the N-termini of proteins containing an N-terminal arginine or lysine. The polypeptide is Leucyl/phenylalanyl-tRNA--protein transferase (Maricaulis maris (strain MCS10) (Caulobacter maris)).